We begin with the raw amino-acid sequence, 588 residues long: Aspartate--tRNA ligase (588 aa).

Glutamate 177 provides a ligand contact to L-aspartate. The segment at 201–204 (QLFK) is aspartate. Arginine 223 is an L-aspartate binding site. ATP-binding positions include 223-225 (RDE) and glutamine 232. Histidine 451 serves as a coordination point for L-aspartate. ATP is bound at residue glutamate 485. Arginine 492 lines the L-aspartate pocket. 537-540 (GLDR) provides a ligand contact to ATP.

The protein belongs to the class-II aminoacyl-tRNA synthetase family. Type 1 subfamily. Homodimer.

It is found in the cytoplasm. The catalysed reaction is tRNA(Asp) + L-aspartate + ATP = L-aspartyl-tRNA(Asp) + AMP + diphosphate. Functionally, catalyzes the attachment of L-aspartate to tRNA(Asp) in a two-step reaction: L-aspartate is first activated by ATP to form Asp-AMP and then transferred to the acceptor end of tRNA(Asp). The sequence is that of Aspartate--tRNA ligase from Staphylococcus aureus (strain MRSA252).